The following is a 390-amino-acid chain: Mannitol-1-phosphate 5-dehydrogenase (390 aa).

7–18 (AVHFGGGNIGRG) contributes to the NAD(+) binding site. Residue Lys216 is part of the active site.

This sequence belongs to the mannitol dehydrogenase family. In terms of assembly, monomer.

It carries out the reaction D-mannitol 1-phosphate + NAD(+) = beta-D-fructose 6-phosphate + NADH + H(+). Catalyzes the NAD(H)-dependent interconversion of D-fructose 6-phosphate and D-mannitol 1-phosphate in the mannitol metabolic pathway. Required for the process of sporulation on senescing leaf material. The protein is Mannitol-1-phosphate 5-dehydrogenase (mpd1) of Phaeosphaeria nodorum (strain SN15 / ATCC MYA-4574 / FGSC 10173) (Glume blotch fungus).